A 289-amino-acid chain; its full sequence is Probable WRKY transcription factor 38 (289 aa).

The segment at proline 62–aspartate 103 is disordered. Residues serine 104–glutamate 172 constitute a DNA-binding region (WRKY). Positions leucine 249–serine 266 are enriched in low complexity. Residues leucine 249 to proline 278 are disordered.

Belongs to the WRKY group III family.

It is found in the nucleus. In terms of biological role, transcription factor. Interacts specifically with the W box (5'-(T)TGAC[CT]-3'), a frequently occurring elicitor-responsive cis-acting element. In Arabidopsis thaliana (Mouse-ear cress), this protein is Probable WRKY transcription factor 38 (WRKY38).